The sequence spans 1187 residues: Probable histidine kinase 5 (1187 aa).

Residues 1–175 (MSRVGECGGG…QNNALSFNHG (175 aa)) are Extracellular-facing. Residues 176–196 (MIFSLSASLGIVVILVVITIF) form a helical membrane-spanning segment. Over 197-226 (KRGKQANELCQHEKLLQTPSVKISRKWSKR) the chain is Cytoplasmic. The helical transmembrane segment at 227–247 (ALLLGVLVGLCSSVWIFSSMH) threads the bilayer. The Extracellular segment spans residues 248–531 (ADVVARRIEN…FKHAPSLPWS (284 aa)). The region spanning 295–519 (NPSAIDQKTF…GDPTRKHVMH (225 aa)) is the CHASE domain. Residues 532–552 (AIMISSAVAIIVLLVGYIIYA) traverse the membrane as a helical segment. The Cytoplasmic portion of the chain corresponds to 553 to 1187 (TLNSLEEAED…LEADATDPLT (635 aa)). Residues 587–862 (TVSHEIRTPM…TFSFTAIFKE (276 aa)) form the Histidine kinase domain. Position 590 is a phosphohistidine; by autocatalysis (histidine 590). 2 Response regulatory domains span residues 886 to 1017 (RALV…SKAL) and 1041 to 1178 (NILV…AHFL). 2 positions are modified to 4-aspartylphosphate: aspartate 942 and aspartate 1091.

Post-translationally, activation probably requires a transfer of a phosphate group between a His in the transmitter domain and an Asp of the receiver domain. In terms of tissue distribution, highly expressed in young leaves and at lower levels in roots, mature leaves, stems and spikelets.

Its subcellular location is the cell membrane. It catalyses the reaction ATP + protein L-histidine = ADP + protein N-phospho-L-histidine.. Its function is as follows. Cytokinin receptor related to bacterial two-component regulators. Functions as a histidine kinase and transmits the stress signal to a downstream MAPK cascade. The chain is Probable histidine kinase 5 from Oryza sativa subsp. japonica (Rice).